A 247-amino-acid chain; its full sequence is DNA polymerase sliding clamp (247 aa).

The protein belongs to the PCNA family. In terms of assembly, homotrimer. The subunits circularize to form a toroid; DNA passes through its center. Replication factor C (RFC) is required to load the toroid on the DNA.

Functionally, sliding clamp subunit that acts as a moving platform for DNA processing. Responsible for tethering the catalytic subunit of DNA polymerase and other proteins to DNA during high-speed replication. The polypeptide is DNA polymerase sliding clamp (Haloarcula marismortui (strain ATCC 43049 / DSM 3752 / JCM 8966 / VKM B-1809) (Halobacterium marismortui)).